A 504-amino-acid chain; its full sequence is Sperm motility kinase 3A (504 aa).

One can recognise a Protein kinase domain in the interval 28–276 (YVMLETIGHG…VAEVMVHPWV (249 aa)). Residues 34 to 42 (IGHGGCATV) and lysine 57 each bind ATP. The active-site Proton acceptor is the aspartate 147. The region spanning 294–334 (KPDPAIVKAMGHIGFQAQDIEDSLRQRKFNQTMASYCLLKK) is the UBA domain. Disordered regions lie at residues 389–421 (VCGK…MDHT) and 441–468 (NSSE…WPRG). The span at 441–451 (NSSEESTQGHT) shows a compositional bias: polar residues.

This sequence belongs to the protein kinase superfamily. CAMK Ser/Thr protein kinase family. Smok subfamily. In terms of tissue distribution, testis-specific. Expressed in the testis from 22 days postpartum (22 dpp).

The catalysed reaction is L-seryl-[protein] + ATP = O-phospho-L-seryl-[protein] + ADP + H(+). The enzyme catalyses L-threonyl-[protein] + ATP = O-phospho-L-threonyl-[protein] + ADP + H(+). Functionally, may play a role in sperm motility, especially in the regulation of flagellar function. In Mus musculus (Mouse), this protein is Sperm motility kinase 3A.